Consider the following 254-residue polypeptide: Ribonuclease HII (254 aa).

Positions 70-254 constitute an RNase H type-2 domain; it reads QAIAGIDEVG…TFEPIKSMYE (185 aa). 3 residues coordinate a divalent metal cation: Asp76, Glu77, and Asp168.

The protein belongs to the RNase HII family. Requires Mn(2+) as cofactor. It depends on Mg(2+) as a cofactor.

It is found in the cytoplasm. It carries out the reaction Endonucleolytic cleavage to 5'-phosphomonoester.. Functionally, endonuclease that specifically degrades the RNA of RNA-DNA hybrids. In Streptococcus sanguinis (strain SK36), this protein is Ribonuclease HII.